Reading from the N-terminus, the 865-residue chain is Leucine-rich repeat-containing protein 66 (865 aa).

Residues 4–24 (FYARVTVMVTGLCFVGTVTNP) traverse the membrane as a helical segment. Asn-42 is a glycosylation site (N-linked (GlcNAc...) asparagine). 5 LRR repeats span residues 138-160 (RLKVLLLQRNQLGPTPKGLWKLK), 161-182 (PLCSLDLSFNRRVGIGLSGFHG), 185-206 (QLKSIYLKNNKILTIHPEAFKG), 209-230 (KLQVVDLRSSALTMLVPIVTIA), and 235-255 (NLELGLADNQWQCNESDANFQ). A glycan (N-linked (GlcNAc...) asparagine) is linked at Asn-248. The chain crosses the membrane as a helical span at residues 366-386 (ALAVCLSVFITFVVAFCLGAF). Disordered regions lie at residues 463–522 (RMLG…PGQH) and 654–749 (DTPS…AESV). A compositionally biased stretch (polar residues) spans 470–479 (MDPSSQQSPG). Residues 675–688 (AVQRDASFDPHDDL) show a composition bias toward basic and acidic residues. The span at 702-713 (FTLSSEGSQDTR) shows a compositional bias: polar residues. 2 positions are modified to phosphoserine: Ser-714 and Ser-748. The 32-residue stretch at 728 to 759 (SQPLPSRNLGEYKDSVTSAESVEDITSQQTLE) folds into the LRRNT domain. A glycan (N-linked (GlcNAc...) asparagine) is linked at Asn-787. The disordered stretch occupies residues 840 to 865 (FPNIDSSPSPPCSDQDPSDPEEHDTK). Residues 855–865 (DPSDPEEHDTK) are compositionally biased toward acidic residues.

The protein localises to the membrane. This Rattus norvegicus (Rat) protein is Leucine-rich repeat-containing protein 66 (Lrrc66).